A 493-amino-acid chain; its full sequence is Lysine--tRNA ligase (493 aa).

Positions 402 and 409 each coordinate Mg(2+).

Belongs to the class-II aminoacyl-tRNA synthetase family. Homodimer. The cofactor is Mg(2+).

It is found in the cytoplasm. The catalysed reaction is tRNA(Lys) + L-lysine + ATP = L-lysyl-tRNA(Lys) + AMP + diphosphate. The polypeptide is Lysine--tRNA ligase (Fusobacterium nucleatum subsp. nucleatum (strain ATCC 25586 / DSM 15643 / BCRC 10681 / CIP 101130 / JCM 8532 / KCTC 2640 / LMG 13131 / VPI 4355)).